The following is a 210-amino-acid chain: Na(+)-translocating NADH-quinone reductase subunit D (210 aa).

5 helical membrane passes run 42–62 (FVMTLAVMFVTALSNLFVSLI), 72–92 (IIVQMAIIASLVIVVDQVLKA), 103–123 (VFVSLIITNCIVMGRAEAFAM), 131–151 (FIDGIGNGLGYGFVLMTVAFF), and 178–198 (NGLMLLAPSAFFLIGFMIWAI).

Belongs to the NqrDE/RnfAE family. As to quaternary structure, composed of six subunits; NqrA, NqrB, NqrC, NqrD, NqrE and NqrF.

The protein localises to the cell inner membrane. The catalysed reaction is a ubiquinone + n Na(+)(in) + NADH + H(+) = a ubiquinol + n Na(+)(out) + NAD(+). Functionally, NQR complex catalyzes the reduction of ubiquinone-1 to ubiquinol by two successive reactions, coupled with the transport of Na(+) ions from the cytoplasm to the periplasm. NqrA to NqrE are probably involved in the second step, the conversion of ubisemiquinone to ubiquinol. This is Na(+)-translocating NADH-quinone reductase subunit D from Aliivibrio fischeri (strain ATCC 700601 / ES114) (Vibrio fischeri).